The following is a 599-amino-acid chain: Calcium-dependent protein kinase 10 (599 aa).

Gly-2 carries N-myristoyl glycine lipidation. The disordered stretch occupies residues 27-110 (RQDGDDALPG…PRPRVPPVKR (84 aa)). A compositionally biased stretch (polar residues) spans 74–84 (VSTTDTASAEQ). A compositionally biased stretch (low complexity) spans 87–98 (SKSSAGSDSGEA). Positions 133 to 391 (YSLGRKLGQG…AHEVLRHPWV (259 aa)) constitute a Protein kinase domain. Residues 139–147 (LGQGQFGTT) and Lys-162 each bind ATP. Asp-257 (proton acceptor) is an active-site residue. Residues 397–427 (APDKPLDSAVLSRMKQFSAMNKLKKMALRVI) are autoinhibitory domain. EF-hand domains are found at residues 434-469 (DEIA…VGAN), 470-505 (LQES…MNKI), 506-541 (ERED…FGLG), and 544-575 (QLEE…PTMG). Asp-447, Asp-449, Ser-451, Gln-453, Glu-458, Asp-483, Asp-485, Ser-487, Thr-489, Glu-494, Asp-519, Asp-521, Ser-523, Tyr-525, Glu-530, Asp-553, Asp-555, Asp-557, Arg-559, and Glu-564 together coordinate Ca(2+).

The protein belongs to the protein kinase superfamily. Ser/Thr protein kinase family. CDPK subfamily. Expressed in roots.

The protein resides in the membrane. The enzyme catalyses L-seryl-[protein] + ATP = O-phospho-L-seryl-[protein] + ADP + H(+). The catalysed reaction is L-threonyl-[protein] + ATP = O-phospho-L-threonyl-[protein] + ADP + H(+). Activated by calcium. Autophosphorylation may play an important role in the regulation of the kinase activity. May play a role in signal transduction pathways that involve calcium as a second messenger. The chain is Calcium-dependent protein kinase 10 from Oryza sativa subsp. japonica (Rice).